Consider the following 251-residue polypeptide: Pyrroloquinoline-quinone synthase (251 aa).

The protein belongs to the PqqC family.

It catalyses the reaction 6-(2-amino-2-carboxyethyl)-7,8-dioxo-1,2,3,4,7,8-hexahydroquinoline-2,4-dicarboxylate + 3 O2 = pyrroloquinoline quinone + 2 H2O2 + 2 H2O + H(+). Its pathway is cofactor biosynthesis; pyrroloquinoline quinone biosynthesis. In terms of biological role, ring cyclization and eight-electron oxidation of 3a-(2-amino-2-carboxyethyl)-4,5-dioxo-4,5,6,7,8,9-hexahydroquinoline-7,9-dicarboxylic-acid to PQQ. The polypeptide is Pyrroloquinoline-quinone synthase (Pseudomonas savastanoi pv. phaseolicola (strain 1448A / Race 6) (Pseudomonas syringae pv. phaseolicola (strain 1448A / Race 6))).